We begin with the raw amino-acid sequence, 599 residues long: Translation initiation factor IF-2 (599 aa).

Residues 111 to 278 (PRPPIITVMG…SILLLAEILE (168 aa)) form the tr-type G domain. Residues 120–127 (GHVDHGKT) are G1. 120–127 (GHVDHGKT) serves as a coordination point for GTP. Residues 145 to 149 (GITQH) are G2. Residues 166-169 (DTPG) form a G3 region. GTP is bound by residues 166–170 (DTPGH) and 220–223 (NKMD). Positions 220–223 (NKMD) are G4. Residues 256 to 258 (SAL) form a G5 region.

The protein belongs to the TRAFAC class translation factor GTPase superfamily. Classic translation factor GTPase family. IF-2 subfamily.

Its subcellular location is the cytoplasm. Its function is as follows. One of the essential components for the initiation of protein synthesis. Protects formylmethionyl-tRNA from spontaneous hydrolysis and promotes its binding to the 30S ribosomal subunits. Also involved in the hydrolysis of GTP during the formation of the 70S ribosomal complex. This chain is Translation initiation factor IF-2, found in Mesomycoplasma hyopneumoniae (strain 232) (Mycoplasma hyopneumoniae).